Reading from the N-terminus, the 301-residue chain is t-SNARE affecting a late Golgi compartment protein 2 (301 aa).

Topologically, residues 1–279 are cytoplasmic; the sequence is MAYRDRTGLY…SHQKNTGRLR (279 aa). Residues 92–120 adopt a coiled-coil conformation; sequence SDKTEQENEIQRLTIQITQDFQRCQKLLQ. Positions 206 to 268 constitute a t-SNARE coiled-coil homology domain; that stretch reads DEQAIRHERA…KSAEKELIKA (63 aa). Residues 280 to 300 form a helical; Anchor for type IV membrane protein membrane-spanning segment; sequence FICFLILLIVALIVILAIKLL. Arg301 is a topological domain (vesicular).

It belongs to the syntaxin family.

The protein localises to the golgi apparatus. The protein resides in the trans-Golgi network membrane. It localises to the endosome membrane. In terms of biological role, t-SNARE that functions in transport from the endosome to the late Golgi and on the endocytic pathway. The sequence is that of t-SNARE affecting a late Golgi compartment protein 2 (tlg2) from Schizosaccharomyces pombe (strain 972 / ATCC 24843) (Fission yeast).